A 148-amino-acid chain; its full sequence is Deoxyuridine 5'-triphosphate nucleotidohydrolase (148 aa).

Substrate-binding positions include 68 to 70 (RSG), Asn-81, and 85 to 87 (TID).

Belongs to the dUTPase family. Mg(2+) serves as cofactor.

It carries out the reaction dUTP + H2O = dUMP + diphosphate + H(+). Its pathway is pyrimidine metabolism; dUMP biosynthesis; dUMP from dCTP (dUTP route): step 2/2. Its function is as follows. This enzyme is involved in nucleotide metabolism: it produces dUMP, the immediate precursor of thymidine nucleotides and it decreases the intracellular concentration of dUTP so that uracil cannot be incorporated into DNA. The protein is Deoxyuridine 5'-triphosphate nucleotidohydrolase of Geobacter metallireducens (strain ATCC 53774 / DSM 7210 / GS-15).